Consider the following 658-residue polypeptide: Sodium/nucleoside cotransporter 1 (658 aa).

Topologically, residues 1–75 (MEKASGRKSL…ARTFCQRHAS (75 aa)) are cytoplasmic. Residues 76-99 (LFKKILLGLLCLAYAAYFLAACIL) form a helical membrane-spanning segment. The Extracellular portion of the chain corresponds to 100–104 (DFQRA). Residues 105-123 (LALFVITCLVILVLLLHFL) traverse the membrane as a helical segment. Residues 124–142 (KKFLGKKLTRCLKPFKNSQ) are Cytoplasmic-facing. Residues 143–162 (LRLWIKRVFAGVSLVGLILW) form a helical membrane-spanning segment. Residues 163–173 (LALDTAQRPEQ) lie on the Extracellular side of the membrane. Residues 174–190 (LISFAGICMFVLILFAC) traverse the membrane as a helical segment. Topologically, residues 191 to 196 (SKHHSA) are cytoplasmic. The chain crosses the membrane as a helical span at residues 197–217 (VSWRTVFWGLGLQFVFGLLVI). At 218–256 (RTDPGFIAFQWLGDQVQIFLAYTVAGSSFVLGDTLVNDV) the chain is on the extracellular side. The helical transmembrane segment at 257-278 (FAFQSLPIIIFFGCVMSILYYL) threads the bilayer. The Cytoplasmic segment spans residues 279 to 289 (GLVQWVVQKIA). A helical transmembrane segment spans residues 290 to 313 (WFLQVTMRTTATETLAVAGNIFVG). The Extracellular segment spans residues 314–332 (MTEAPLLIRPYLADLTLSE). Residues 333-355 (IHAVMTSGFATISGTVLGAFISF) traverse the membrane as a helical segment. The Cytoplasmic segment spans residues 356 to 361 (GIDASS). A helical transmembrane segment spans residues 362–381 (LISASVMGAPCALALSKLVY). Residues 382–418 (PEEEESKFKSKEGVKLPRGKESNVLEAASNGATDAIA) are Extracellular-facing. A helical membrane pass occupies residues 419–441 (LVANVAANLVAFLAVLAFINAAL). Over 442–452 (SWLGELVDIQG) the chain is Cytoplasmic. A helical membrane pass occupies residues 453–474 (LTFQVICSYILRPMVYMMGVEW). The Extracellular portion of the chain corresponds to 475–529 (TDCPMVAEMVGIKFFTNEFVAYQQLSQYKKKRLSGMEEWIDGQKQWISVRAEVIT). The chain crosses the membrane as a helical span at residues 530–553 (TFSLCGFANLSSIGITLGGLTSMV). Over 554 to 564 (PHRKSDLSKVV) the chain is Cytoplasmic. A helical membrane pass occupies residues 565-587 (IRALFTGSCVSFISACVAGILYV). Residues 588-658 (PRGAETDCVS…CGFYNNTVCA (71 aa)) lie on the Extracellular side of the membrane. An N-linked (GlcNAc...) asparagine glycan is attached at Asn-653.

The protein belongs to the concentrative nucleoside transporter (CNT) (TC 2.A.41) family. Post-translationally, N-glycosylated. N-glycosylation is required for localization to the plasma membrane and the transporter activity.

The protein resides in the cell membrane. Its subcellular location is the apical cell membrane. The enzyme catalyses uridine(out) + Na(+)(out) = uridine(in) + Na(+)(in). It catalyses the reaction thymidine(out) + Na(+)(out) = thymidine(in) + Na(+)(in). The catalysed reaction is cytidine(out) + Na(+)(out) = cytidine(in) + Na(+)(in). It carries out the reaction adenosine(out) + Na(+)(out) = adenosine(in) + Na(+)(in). With respect to regulation, due to its high apparent affinity but slow transport, adenosine could act as a negative regulator of pyrimidine transport under some conditions. In terms of biological role, sodium and pyrimidine nucleoside symporter of the plasma membrane that imports uridine, thymidine and cytidine into cells by coupling their transport to the transmembrane sodium electrochemical gradient. Also transports adenosine, an atypical substrate transported with high apparent affinity, but low maximum velocity. Therefore, exhibits the transport characteristics of the nucleoside transport system cit or N2 subtype (N2/cit). Involved in renal nucleoside (re)absorption. This is Sodium/nucleoside cotransporter 1 (SLC28A1) from Oryctolagus cuniculus (Rabbit).